The chain runs to 192 residues: MLIVLLALLLLSCSPKYKIVKEYVLPQNTLCVQDCKEKFLECKKACFESYNACLKESVERARKVYLSLLKDYERKSREYEKAYENYLKELRTYRETLYRIKEDLKFYERICSAYKDKEACDKKEWLKKRIRFYERRKPLPPQKPTMPSYEILLKREREACSCECGCEKLYDACFESCRGKVRIKKVCVENCD.

The stretch at 53 to 111 (CLKESVERARKVYLSLLKDYERKSREYEKAYENYLKELRTYRETLYRIKEDLKFYERIC) forms a coiled coil.

This is an uncharacterized protein from Aquifex aeolicus (strain VF5).